A 246-amino-acid polypeptide reads, in one-letter code: Uridylate kinase (246 aa).

An ATP-binding site is contributed by 20-23 (KISG). Residues 28 to 33 (GDQGYG) are involved in allosteric activation by GTP. G62 contacts UMP. 2 residues coordinate ATP: G63 and R67. UMP contacts are provided by residues D82 and 143–150 (TGNPYFTT). ATP is bound by residues T170, Y176, and D179.

This sequence belongs to the UMP kinase family. In terms of assembly, homohexamer.

It is found in the cytoplasm. The enzyme catalyses UMP + ATP = UDP + ADP. Its pathway is pyrimidine metabolism; CTP biosynthesis via de novo pathway; UDP from UMP (UMPK route): step 1/1. Allosterically activated by GTP. Inhibited by UTP. Functionally, catalyzes the reversible phosphorylation of UMP to UDP. This is Uridylate kinase from Cereibacter sphaeroides (strain ATCC 17023 / DSM 158 / JCM 6121 / CCUG 31486 / LMG 2827 / NBRC 12203 / NCIMB 8253 / ATH 2.4.1.) (Rhodobacter sphaeroides).